Reading from the N-terminus, the 700-residue chain is Pentatricopeptide repeat-containing protein At3g26540 (700 aa).

PPR repeat units follow at residues 95–125, 126–160, 161–195, 196–226, 227–261, 262–296, 297–327, 328–362, 363–389, 394–428, 429–459, 461–495, 497–529, 530–560, 561–595, 596–626, and 632–662; these read PIFL…MPER, DGGS…GVRA, TETS…GYSG, NVDL…IVNP, SDVS…NVRP, LNHT…SVVA, DTVV…TRSK, DLKS…NIVS, WNAM…MRQE, DNVT…GYDT, NVIV…MSEL, DEVS…AKPS, YTLA…GYKI, DVVI…AATR, DLIL…GVKP, DHVT…MSTK, and QVEH…MPFD.

This sequence belongs to the PPR family. PCMP-A subfamily.

This chain is Pentatricopeptide repeat-containing protein At3g26540 (PCMP-A5), found in Arabidopsis thaliana (Mouse-ear cress).